Here is a 290-residue protein sequence, read N- to C-terminus: NAD kinase (290 aa).

Residue Asp-73 is the Proton acceptor of the active site. NAD(+) is bound by residues 73 to 74 (DG), 147 to 148 (ND), Arg-158, Arg-175, Asp-177, 188 to 193 (TAYALS), and Gln-246.

This sequence belongs to the NAD kinase family. It depends on a divalent metal cation as a cofactor.

The protein resides in the cytoplasm. It carries out the reaction NAD(+) + ATP = ADP + NADP(+) + H(+). Involved in the regulation of the intracellular balance of NAD and NADP, and is a key enzyme in the biosynthesis of NADP. Catalyzes specifically the phosphorylation on 2'-hydroxyl of the adenosine moiety of NAD to yield NADP. This is NAD kinase from Thiobacillus denitrificans (strain ATCC 25259 / T1).